Here is a 248-residue protein sequence, read N- to C-terminus: MEQAHTQLIAQLNERILAADNTPLYIKFAETVKNAVRSGVLEHGNILPGERDLSQLTGVSRITVRKAMQALEEEGVVTRSRGYGTQINNIFEYSLKEARGFSQQVVLRGKKPDTLWVNKRVVKCPEEVAQQLAVEAGSDVFLLKRIRYVDEEAVSIEESWVPAHLIHDVDAIGISLYDYFRSQHIYPQRTRSRVSARMPDAEFQSHIQLDSKIPVLVIKQVALDQQQRPIEYSISHCRSDLYVFVCEE.

An HTH gntR-type domain is found at 22-90 (TPLYIKFAET…RGYGTQINNI (69 aa)). Positions 50–69 (ERDLSQLTGVSRITVRKAMQ) form a DNA-binding region, H-T-H motif.

With respect to regulation, senses ADP-glucose (ADPG), which is the substrate for glycogen elongation, as an effector. In the presence of ADPG, GgaR becomes inactive and derepresses the yegTUV operon, leading to glycogen accumulation. In contrast, in the absence of glucose, the concentration of ADPG decreases, GgaR becomes active, and glycogen accumulation is repressed. Its function is as follows. Transcriptional regulator that regulates glycogen accumulation in response to the amount of glucose available to the cell. Acts as a repressor of the yegTUV operon, which may be involved in glycogen accumulation. This is HTH-type transcriptional regulator GgaR from Escherichia coli O6:H1 (strain CFT073 / ATCC 700928 / UPEC).